The following is a 727-amino-acid chain: Polyphosphate kinase (727 aa).

N82 contributes to the ATP binding site. The Mg(2+) site is built by R412 and R442. The active-site Phosphohistidine intermediate is the H472. 3 residues coordinate ATP: Y505, R601, and H629.

It belongs to the polyphosphate kinase 1 (PPK1) family. Mg(2+) serves as cofactor. In terms of processing, an intermediate of this reaction is the autophosphorylated ppk in which a phosphate is covalently linked to a histidine residue through a N-P bond.

The catalysed reaction is [phosphate](n) + ATP = [phosphate](n+1) + ADP. In terms of biological role, catalyzes the reversible transfer of the terminal phosphate of ATP to form a long-chain polyphosphate (polyP). The chain is Polyphosphate kinase from Pseudomonas putida (strain ATCC 47054 / DSM 6125 / CFBP 8728 / NCIMB 11950 / KT2440).